The primary structure comprises 352 residues: Ferredoxin--NADP reductase 2 (352 aa).

The FAD site is built by Glu36, Lys44, Tyr48, Ile88, Leu123, Asp290, and Ser331.

The protein belongs to the ferredoxin--NADP reductase type 2 family. In terms of assembly, homodimer. It depends on FAD as a cofactor.

The catalysed reaction is 2 reduced [2Fe-2S]-[ferredoxin] + NADP(+) + H(+) = 2 oxidized [2Fe-2S]-[ferredoxin] + NADPH. The chain is Ferredoxin--NADP reductase 2 from Exiguobacterium sibiricum (strain DSM 17290 / CCUG 55495 / CIP 109462 / JCM 13490 / 255-15).